The primary structure comprises 240 residues: MAATTGNIIKFEENADSKDLLEQCLNCSDVGVVSNTVRNMDGTIAADLARTLIPAMLINMQPSLAIWLHWIIVTHGGYLTTVMDLQDSLVQLHEKLVQSAHLMTKIFSLSGKLNMVLSQEEMRQRRLDFSSEDGEEEEENDYIDEDVDEAGYDIEVVDEAENDDMDNDLEANADAFDESNLEASLSPNAELSPRKSHIDHDFVIPEDEMLSEEEEQEVEKQILPKFVVPESPRKTSRKSR.

Disordered regions lie at residues 125 to 148 and 177 to 240; these read RRLDFSSEDGEEEEENDYIDEDVD and DESN…RKSR. A compositionally biased stretch (acidic residues) spans 130-148; sequence SSEDGEEEEENDYIDEDVD. Residues 192 to 203 are compositionally biased toward basic and acidic residues; that stretch reads SPRKSHIDHDFV. Residues 204–217 are compositionally biased toward acidic residues; that stretch reads IPEDEMLSEEEEQE. At serine 231 the chain carries Phosphoserine.

It belongs to the UTP5 family.

It is found in the cytoplasm. Its subcellular location is the nucleus. This is an uncharacterized protein from Schizosaccharomyces pombe (strain 972 / ATCC 24843) (Fission yeast).